Here is a 394-residue protein sequence, read N- to C-terminus: Phosphoglycerate kinase (394 aa).

Substrate is bound by residues 21–23 (DLN), 59–62 (HLGR), Arg117, and Arg150. ATP-binding positions include Lys201, Glu318, and 344–347 (GGDT).

It belongs to the phosphoglycerate kinase family. In terms of assembly, monomer.

The protein resides in the cytoplasm. It carries out the reaction (2R)-3-phosphoglycerate + ATP = (2R)-3-phospho-glyceroyl phosphate + ADP. Its pathway is carbohydrate degradation; glycolysis; pyruvate from D-glyceraldehyde 3-phosphate: step 2/5. The chain is Phosphoglycerate kinase from Blochmanniella pennsylvanica (strain BPEN).